Here is a 936-residue protein sequence, read N- to C-terminus: Lipoxygenase 2.1, chloroplastic (936 aa).

The disordered stretch occupies residues 1–69; it reads MLTATKPLVG…LSADSNGAAV (69 aa). Residues 47-59 show a composition bias toward low complexity; it reads STSTSTTTTTTTT. The PLAT domain maps to 88-217; it reads MKATVTVHMS…CTPDKRVFFP (130 aa). The Lipoxygenase domain maps to 220–936; that stretch reads SYLPSQTPKG…EMGIPNSISI (717 aa). The segment at 264 to 308 is disordered; sequence LGNPDDDNNPTTRPVLGGKEHPYPRRCRTGRPRSKKDPFSEERSH. Residues 287-297 are compositionally biased toward basic residues; it reads PRRCRTGRPRS. Residues 298-308 are compositionally biased toward basic and acidic residues; it reads KKDPFSEERSH. 5 residues coordinate Fe cation: histidine 587, histidine 592, histidine 777, asparagine 781, and isoleucine 936.

This sequence belongs to the lipoxygenase family. Requires Fe cation as cofactor. Post-translationally, the N-terminus is blocked.

It localises to the plastid. The protein resides in the chloroplast. The enzyme catalyses (9Z,12Z)-octadecadienoate + O2 = (13S)-hydroperoxy-(9Z,11E)-octadecadienoate. It carries out the reaction (9Z,12Z,15Z)-octadecatrienoate + O2 = (13S)-hydroperoxy-(9Z,11E,15Z)-octadecatrienoate. It functions in the pathway lipid metabolism; oxylipin biosynthesis. Plant lipoxygenase may be involved in a number of diverse aspects of plant physiology including growth and development, pest resistance, and senescence or responses to wounding. This enzyme is possibly involved in jasmonic acid synthesis. It exhibits linoleate 13-lipoxygenase and arachidonate 15-lipoxygenase activity. This Hordeum vulgare (Barley) protein is Lipoxygenase 2.1, chloroplastic (LOX2.1).